The chain runs to 406 residues: Cysteine desulfurase (406 aa).

An N6-(pyridoxal phosphate)lysine modification is found at Lys-226. Cys-364 functions as the Cysteine persulfide intermediate in the catalytic mechanism.

Belongs to the class-V pyridoxal-phosphate-dependent aminotransferase family. Csd subfamily. Homodimer. Interacts with SufE and the SufBCD complex composed of SufB, SufC and SufD. The interaction with SufE is required to mediate the direct transfer of the sulfur atom from the S-sulfanylcysteine. Pyridoxal 5'-phosphate serves as cofactor.

The protein resides in the cytoplasm. The catalysed reaction is (sulfur carrier)-H + L-cysteine = (sulfur carrier)-SH + L-alanine. It catalyses the reaction L-selenocysteine + AH2 = hydrogenselenide + L-alanine + A + H(+). The protein operates within cofactor biosynthesis; iron-sulfur cluster biosynthesis. Its function is as follows. Cysteine desulfurases mobilize the sulfur from L-cysteine to yield L-alanine, an essential step in sulfur metabolism for biosynthesis of a variety of sulfur-containing biomolecules. Component of the suf operon, which is activated and required under specific conditions such as oxidative stress and iron limitation. Acts as a potent selenocysteine lyase in vitro, that mobilizes selenium from L-selenocysteine. Selenocysteine lyase activity is however unsure in vivo. The protein is Cysteine desulfurase of Escherichia coli O127:H6 (strain E2348/69 / EPEC).